We begin with the raw amino-acid sequence, 238 residues long: Large ribosomal subunit protein uL1 (238 aa).

Belongs to the universal ribosomal protein uL1 family. Part of the 50S ribosomal subunit.

In terms of biological role, binds directly to 23S rRNA. The L1 stalk is quite mobile in the ribosome, and is involved in E site tRNA release. Protein L1 is also a translational repressor protein, it controls the translation of the L11 operon by binding to its mRNA. The polypeptide is Large ribosomal subunit protein uL1 (Trichormus variabilis (strain ATCC 29413 / PCC 7937) (Anabaena variabilis)).